A 232-amino-acid chain; its full sequence is Enterobactin synthase component D (232 aa).

The Mg(2+) site is built by Asp-106, Glu-108, and Glu-150.

It belongs to the P-Pant transferase superfamily. EntD family. EntB, EntD, EntE, and EntF form a multienzyme complex called enterobactin synthase. It depends on Mg(2+) as a cofactor.

Its subcellular location is the membrane. It carries out the reaction apo-[aryl-carrier protein] + CoA = holo-[aryl-carrier protein] + adenosine 3',5'-bisphosphate + H(+). It catalyses the reaction apo-[peptidyl-carrier protein] + CoA = holo-[peptidyl-carrier protein] + adenosine 3',5'-bisphosphate + H(+). It functions in the pathway siderophore biosynthesis; enterobactin biosynthesis. Involved in the biosynthesis of the siderophore enterobactin (enterochelin), which is a macrocyclic trimeric lactone of N-(2,3-dihydroxybenzoyl)-serine. The serine trilactone serves as a scaffolding for the three catechol functionalities that provide hexadentate coordination for the tightly ligated iron(2+) atoms. Plays an essential role in the assembly of the enterobactin by catalyzing the transfer of the 4'-phosphopantetheine (Ppant) moiety from coenzyme A to the apo-domains of both EntB (ArCP domain) and EntF (PCP domain) to yield their holo-forms which make them competent for the activation of 2,3-dihydroxybenzoate (DHB) and L-serine, respectively. The polypeptide is Enterobactin synthase component D (Salmonella austin).